The chain runs to 128 residues: Ribonuclease P protein component 4 (128 aa).

Residues C63, C66, C92, and C95 each contribute to the Zn(2+) site.

It belongs to the eukaryotic/archaeal RNase P protein component 4 family. As to quaternary structure, consists of a catalytic RNA component and at least 4 protein subunits. Forms a subcomplex with Rnp1 which stimulates the catalytic RNA. Zn(2+) serves as cofactor.

Its subcellular location is the cytoplasm. The catalysed reaction is Endonucleolytic cleavage of RNA, removing 5'-extranucleotides from tRNA precursor.. Its function is as follows. Part of ribonuclease P, a protein complex that generates mature tRNA molecules by cleaving their 5'-ends. This Methanocaldococcus jannaschii (strain ATCC 43067 / DSM 2661 / JAL-1 / JCM 10045 / NBRC 100440) (Methanococcus jannaschii) protein is Ribonuclease P protein component 4.